The sequence spans 163 residues: Peptidyl-prolyl cis-trans isomerase FKBP15-2 (163 aa).

The first 25 residues, 1–25 (MASKMSLRYSLFLIFFSLISLQGFA), serve as a signal peptide directing secretion. One can recognise a PPIase FKBP-type domain in the interval 52-140 (GDTIKVHYRG…IFDTELIAVN (89 aa)). Residues 142–163 (KPAGGEEYGGDEDDEGYGNDEL) are disordered. The span at 149–163 (YGGDEDDEGYGNDEL) shows a compositional bias: acidic residues. The Prevents secretion from ER motif lies at 160–163 (NDEL).

This sequence belongs to the FKBP-type PPIase family.

The protein resides in the endoplasmic reticulum lumen. It carries out the reaction [protein]-peptidylproline (omega=180) = [protein]-peptidylproline (omega=0). In terms of biological role, PPIases accelerate the folding of proteins. It catalyzes the cis-trans isomerization of proline imidic peptide bonds in oligopeptides. The polypeptide is Peptidyl-prolyl cis-trans isomerase FKBP15-2 (FKBP15-2) (Arabidopsis thaliana (Mouse-ear cress)).